Here is a 338-residue protein sequence, read N- to C-terminus: Ketol-acid reductoisomerase (NADP(+)) (338 aa).

The region spanning 1-181 (MKVYYDKDAD…GGTKGGVIET (181 aa)) is the KARI N-terminal Rossmann domain. Residues 24-27 (YGSQ), arginine 47, serine 52, and 82-85 (DETQ) contribute to the NADP(+) site. The active site involves histidine 107. Residue glycine 133 participates in NADP(+) binding. The KARI C-terminal knotted domain maps to 182-327 (SFREETETDL…AELRAMMPWI (146 aa)). 4 residues coordinate Mg(2+): aspartate 190, glutamate 194, glutamate 226, and glutamate 230. Substrate is bound at residue serine 251.

It belongs to the ketol-acid reductoisomerase family. Mg(2+) serves as cofactor.

It catalyses the reaction (2R)-2,3-dihydroxy-3-methylbutanoate + NADP(+) = (2S)-2-acetolactate + NADPH + H(+). The catalysed reaction is (2R,3R)-2,3-dihydroxy-3-methylpentanoate + NADP(+) = (S)-2-ethyl-2-hydroxy-3-oxobutanoate + NADPH + H(+). Its pathway is amino-acid biosynthesis; L-isoleucine biosynthesis; L-isoleucine from 2-oxobutanoate: step 2/4. It functions in the pathway amino-acid biosynthesis; L-valine biosynthesis; L-valine from pyruvate: step 2/4. Functionally, involved in the biosynthesis of branched-chain amino acids (BCAA). Catalyzes an alkyl-migration followed by a ketol-acid reduction of (S)-2-acetolactate (S2AL) to yield (R)-2,3-dihydroxy-isovalerate. In the isomerase reaction, S2AL is rearranged via a Mg-dependent methyl migration to produce 3-hydroxy-3-methyl-2-ketobutyrate (HMKB). In the reductase reaction, this 2-ketoacid undergoes a metal-dependent reduction by NADPH to yield (R)-2,3-dihydroxy-isovalerate. In Laribacter hongkongensis (strain HLHK9), this protein is Ketol-acid reductoisomerase (NADP(+)).